The following is an 832-amino-acid chain: Protein PPP4R3C (832 aa).

The tract at residues 708-832 (RTQEGEAVMP…SPKKKPHLSS (125 aa)) is disordered. Basic and acidic residues-rich tracts occupy residues 725–735 (FTETKRTHQEG) and 749–765 (METKRNQEHEGKVDSPK). The span at 769-779 (SGDFKFSSSYS) shows a compositional bias: low complexity. Over residues 801–820 (PDDEEEKEEDEEEKEEDKED) the composition is skewed to acidic residues.

The protein belongs to the SMEK family.

The polypeptide is Protein PPP4R3C (Homo sapiens (Human)).